The chain runs to 171 residues: uncharacterized protein (171 aa).

This is an uncharacterized protein from Mycobacterium tuberculosis (strain ATCC 25618 / H37Rv).